Consider the following 416-residue polypeptide: Multifunctional CCA protein (416 aa).

2 residues coordinate ATP: Gly8 and Arg11. CTP contacts are provided by Gly8 and Arg11. Residues Asp21 and Asp23 each contribute to the Mg(2+) site. Arg91, Arg138, and Arg141 together coordinate ATP. CTP contacts are provided by Arg91, Arg138, and Arg141. The HD domain occupies 229–331 (TGLHQELVSD…YELLQRCDAF (103 aa)).

Belongs to the tRNA nucleotidyltransferase/poly(A) polymerase family. Bacterial CCA-adding enzyme type 1 subfamily. As to quaternary structure, monomer. Can also form homodimers and oligomers. Requires Mg(2+) as cofactor. It depends on Ni(2+) as a cofactor.

The enzyme catalyses a tRNA precursor + 2 CTP + ATP = a tRNA with a 3' CCA end + 3 diphosphate. It catalyses the reaction a tRNA with a 3' CCA end + 2 CTP + ATP = a tRNA with a 3' CCACCA end + 3 diphosphate. Functionally, catalyzes the addition and repair of the essential 3'-terminal CCA sequence in tRNAs without using a nucleic acid template. Adds these three nucleotides in the order of C, C, and A to the tRNA nucleotide-73, using CTP and ATP as substrates and producing inorganic pyrophosphate. tRNA 3'-terminal CCA addition is required both for tRNA processing and repair. Also involved in tRNA surveillance by mediating tandem CCA addition to generate a CCACCA at the 3' terminus of unstable tRNAs. While stable tRNAs receive only 3'-terminal CCA, unstable tRNAs are marked with CCACCA and rapidly degraded. The chain is Multifunctional CCA protein from Xylella fastidiosa (strain M12).